The sequence spans 453 residues: Allantoinase (453 aa).

6 residues coordinate Zn(2+): His-59, His-61, Lys-146, His-186, His-242, and Asp-315. Lys-146 carries the post-translational modification N6-carboxylysine.

This sequence belongs to the metallo-dependent hydrolases superfamily. Allantoinase family. As to quaternary structure, homotetramer. It depends on Zn(2+) as a cofactor. Post-translationally, carboxylation allows a single lysine to coordinate two zinc ions.

The catalysed reaction is (S)-allantoin + H2O = allantoate + H(+). Its pathway is nitrogen metabolism; (S)-allantoin degradation; allantoate from (S)-allantoin: step 1/1. In terms of biological role, catalyzes the conversion of allantoin (5-ureidohydantoin) to allantoic acid by hydrolytic cleavage of the five-member hydantoin ring. This is Allantoinase from Salmonella gallinarum (strain 287/91 / NCTC 13346).